Here is a 216-residue protein sequence, read N- to C-terminus: MPDITIALSKGRIFEDTIPFLEAAGIIPQDDPDTSRKLIIETNRPDVRLVMVRATDVPTYVQYGAADLGVAGKDVLLEHDGVGLYQPLDLKIARCHMMVAVRDGYDYASAVFQGARLRVATKYVKTARSHFAAKGMHVDLIKLYGSMELAPLVDLADAIVDLVSTGGTLKANRLQAVEEIMPISARLIVNQAALKLKNPTIQPLLEAFNAAIPANV.

Belongs to the ATP phosphoribosyltransferase family. Short subfamily. Heteromultimer composed of HisG and HisZ subunits.

The protein resides in the cytoplasm. It catalyses the reaction 1-(5-phospho-beta-D-ribosyl)-ATP + diphosphate = 5-phospho-alpha-D-ribose 1-diphosphate + ATP. It participates in amino-acid biosynthesis; L-histidine biosynthesis; L-histidine from 5-phospho-alpha-D-ribose 1-diphosphate: step 1/9. Functionally, catalyzes the condensation of ATP and 5-phosphoribose 1-diphosphate to form N'-(5'-phosphoribosyl)-ATP (PR-ATP). Has a crucial role in the pathway because the rate of histidine biosynthesis seems to be controlled primarily by regulation of HisG enzymatic activity. This Nitrosomonas eutropha (strain DSM 101675 / C91 / Nm57) protein is ATP phosphoribosyltransferase.